A 1216-amino-acid polypeptide reads, in one-letter code: Probable cation-transporting ATPase 13A5 (1216 aa).

5 helical membrane passes run R33 to W53, L198 to W218, G222 to V242, F401 to M421, and M433 to G453. The 4-aspartylphosphate intermediate role is filled by D486. N650 and N817 each carry an N-linked (GlcNAc...) asparagine glycan. Residues D848 and D852 each coordinate Mg(2+). Transmembrane regions (helical) follow at residues A896 to I916, Y933 to I950, L971 to L991, F1040 to F1060, L1075 to F1095, and V1113 to V1133.

The protein belongs to the cation transport ATPase (P-type) (TC 3.A.3) family. Type V subfamily. As to expression, specifically expressed in brain and stomach.

Its subcellular location is the membrane. It catalyses the reaction ATP + H2O = ADP + phosphate + H(+). The sequence is that of Probable cation-transporting ATPase 13A5 (Atp13a5) from Mus musculus (Mouse).